Reading from the N-terminus, the 186-residue chain is Nicotinamidase/pyrazinamidase (186 aa).

The Proton acceptor role is filled by Asp8. Fe cation contacts are provided by Asp49, His51, His57, and His71. The active site involves Lys96. Cys138 acts as the Nucleophile in catalysis.

Belongs to the isochorismatase family. In terms of assembly, monomer. The cofactor is Mn(2+). It depends on Fe(2+) as a cofactor.

It catalyses the reaction nicotinamide + H2O = nicotinate + NH4(+). The enzyme catalyses pyrazinamide + H2O = pyrazine-2-carboxylate + NH4(+). It participates in cofactor biosynthesis; nicotinate biosynthesis; nicotinate from nicotinamide: step 1/1. Is inhibited by Cu(2+), Zn(2+) and Fe(3+). In terms of biological role, catalyzes the deamidation of nicotinamide (NAM) into nicotinate. Likely functions in the cyclical salvage pathway for production of NAD from nicotinamide. Its function is as follows. Is involved in the activation of the first-line antituberculous drug pyrazinamide (PZA) by converting it into the active form, pyrazinoic acid. The chain is Nicotinamidase/pyrazinamidase from Mycobacterium tuberculosis (strain ATCC 25618 / H37Rv).